We begin with the raw amino-acid sequence, 146 residues long: Small ribosomal subunit protein bS16 (146 aa).

Residues 119–146 (GSENKGGKSKKAEEKSAEKTAEKSEGEA) are disordered. A compositionally biased stretch (basic and acidic residues) spans 128-146 (KKAEEKSAEKTAEKSEGEA).

It belongs to the bacterial ribosomal protein bS16 family.

The polypeptide is Small ribosomal subunit protein bS16 (Thermobifida fusca (strain YX)).